Here is an 874-residue protein sequence, read N- to C-terminus: Alanine--tRNA ligase (874 aa).

The Zn(2+) site is built by His562, His566, Cys664, and His668.

This sequence belongs to the class-II aminoacyl-tRNA synthetase family. Requires Zn(2+) as cofactor.

The protein resides in the cytoplasm. The enzyme catalyses tRNA(Ala) + L-alanine + ATP = L-alanyl-tRNA(Ala) + AMP + diphosphate. Catalyzes the attachment of alanine to tRNA(Ala) in a two-step reaction: alanine is first activated by ATP to form Ala-AMP and then transferred to the acceptor end of tRNA(Ala). Also edits incorrectly charged Ser-tRNA(Ala) and Gly-tRNA(Ala) via its editing domain. The polypeptide is Alanine--tRNA ligase (Shewanella sp. (strain ANA-3)).